The chain runs to 376 residues: Na(+)/H(+) antiporter NhaA (376 aa).

Transmembrane regions (helical) follow at residues Phe-8–Leu-28, Leu-49–Leu-69, Ile-87–Phe-107, Gly-117–Gly-137, Ala-140–Val-160, Ile-162–Ile-182, Leu-209–Ile-229, Pro-248–Ala-268, Ile-270–Gly-290, Gly-321–Phe-341, and Glu-349–Leu-369.

This sequence belongs to the NhaA Na(+)/H(+) (TC 2.A.33) antiporter family.

The protein resides in the cell inner membrane. The catalysed reaction is Na(+)(in) + 2 H(+)(out) = Na(+)(out) + 2 H(+)(in). Its function is as follows. Na(+)/H(+) antiporter that extrudes sodium in exchange for external protons. The chain is Na(+)/H(+) antiporter NhaA from Rhizorhabdus wittichii (strain DSM 6014 / CCUG 31198 / JCM 15750 / NBRC 105917 / EY 4224 / RW1) (Sphingomonas wittichii).